A 191-amino-acid chain; its full sequence is MSDHENTGENTSEYQYKQPPQKSIDELLNADKEDESLKVYKAKLLGQGTVIVDEKNPLRVIVRSVELLINGKTAQSFDLSDPAKLVNSDLSVSIKEGSNYRLSFAFHVQREITSGLHYKHKVKRSGITVENEKYMMGSYAPKLEIQEYKSPNEEAPSGMMHRGKYKVYSKITDDDNNVYLDWQWTLHITKE.

Positions M1–K22 are disordered. The span at G8–Q21 shows a compositional bias: polar residues.

The protein belongs to the Rho GDI family.

It is found in the cytoplasm. Regulates the GDP/GTP exchange reaction of the Rho proteins by inhibiting the dissociation of GDP from them, and the subsequent binding of GTP to them. This Caenorhabditis elegans protein is Probable rho GDP-dissociation inhibitor (rhi-1).